Reading from the N-terminus, the 622-residue chain is Vacuolar protein sorting-associated protein 27 (622 aa).

In terms of domain architecture, VHS spans 18 to 149; it reads SESIPNGDLD…KLISRGIKFP (132 aa). A Phosphoserine modification is found at Ser-157. The segment at 170-230 adopts an FYVE-type; atypical zinc-finger fold; sequence WIDSDACMIC…VCDSCFEDYD (61 aa). Zn(2+) contacts are provided by Cys-176, Cys-179, Cys-192, Cys-195, Cys-200, His-203, Cys-222, and Cys-225. Residues 236-260 form a disordered region; sequence DSKKSKKHRHKRKKDRDYSTPEDEE. Residues 239–249 show a composition bias toward basic residues; it reads KSKKHRHKRKK. The 20-residue stretch at 258–277 folds into the UIM 1 domain; it reads DEEELIRKAIELSLKESRNS. Lys-294 participates in a covalent cross-link: Glycyl lysine isopeptide (Lys-Gly) (interchain with G-Cter in ubiquitin). The region spanning 301 to 320 is the UIM 2 domain; it reads EEDPDLKAAIQESLREAEEA. Basic and acidic residues predominate over residues 317–328; the sequence is AEEAKLRSERQK. Disordered regions lie at residues 317–348 and 462–622; these read AEEA…IHSV and AESY…LIEL. A compositionally biased stretch (polar residues) spans 462-500; sequence AESYQTPPLQQLSSHQYKPQQDVSRQQSVKANSSPTTNI. The residue at position 495 (Ser-495) is a Phosphoserine. Positions 533-548 are enriched in acidic residues; that stretch reads EAEDEGTQAVQDEESS. Ser-613 carries the phosphoserine modification.

It belongs to the VPS27 family. As to quaternary structure, component of the ESCRT-0 complex composed of HSE1 and VPS27. Interacts with ENT3 and ENT5, the ESCRT-I subunits VPS23 and VPS28 and with the COPIb subunits SEC27, SEC28 and SEC33. May form a complex composed of VPS27, HSE1 and DOA1. Interacts with DOA1. Interacts with ubiquitin.

Its subcellular location is the endosome membrane. In terms of biological role, component of the ESCRT-0 complex which is the sorting receptor for ubiquitinated cargo proteins at the multivesicular body (MVB) and recruits ESCRT-I to the MVB outer membrane. Controls exit from the prevacuolar compartment (PVC) in both the forward direction to the vacuole and the return to the Golgi. Allows VPS10 to return to the (trans-Golgi network) TGN from the PVC. Might also function as an alternate adapter in the COPIb clathrin-like coat. The polypeptide is Vacuolar protein sorting-associated protein 27 (VPS27) (Saccharomyces cerevisiae (strain ATCC 204508 / S288c) (Baker's yeast)).